The following is a 1224-amino-acid chain: ATP-dependent helicase/nuclease subunit A (1224 aa).

One can recognise a UvrD-like helicase ATP-binding domain in the interval 15-480 (VIWTDAQWQS…IDLSQNFRSR (466 aa)). Residue 36-43 (AAAGSGKT) participates in ATP binding. The 295-residue stretch at 497–791 (EQVGEISYDD…RMMTIHSSKG (295 aa)) folds into the UvrD-like helicase C-terminal domain.

This sequence belongs to the helicase family. AddA subfamily. In terms of assembly, heterodimer of AddA and AddB/RexB. Mg(2+) is required as a cofactor.

It carries out the reaction Couples ATP hydrolysis with the unwinding of duplex DNA by translocating in the 3'-5' direction.. The catalysed reaction is ATP + H2O = ADP + phosphate + H(+). Functionally, the heterodimer acts as both an ATP-dependent DNA helicase and an ATP-dependent, dual-direction single-stranded exonuclease. Recognizes the chi site generating a DNA molecule suitable for the initiation of homologous recombination. The AddA nuclease domain is required for chi fragment generation; this subunit has the helicase and 3' -&gt; 5' nuclease activities. The sequence is that of ATP-dependent helicase/nuclease subunit A from Staphylococcus epidermidis (strain ATCC 12228 / FDA PCI 1200).